Consider the following 101-residue polypeptide: B3 domain-containing protein At1g08985 (101 aa).

Residues 7-101 (IVKTLSETDC…WQNTKFIFSM (95 aa)) constitute a DNA-binding region (TF-B3).

It localises to the nucleus. The polypeptide is B3 domain-containing protein At1g08985 (Arabidopsis thaliana (Mouse-ear cress)).